A 33-amino-acid chain; its full sequence is Cytochrome b6-f complex subunit 8 (33 aa).

The chain crosses the membrane as a helical span at residues 2 to 22; it reads LISLGWAALAATFTFSIAMVV.

Belongs to the PetN family. In terms of assembly, the 4 large subunits of the cytochrome b6-f complex are cytochrome b6, subunit IV (17 kDa polypeptide, PetD), cytochrome f and the Rieske protein, while the 4 small subunits are PetG, PetL, PetM and PetN. The complex functions as a dimer.

It is found in the cellular thylakoid membrane. Component of the cytochrome b6-f complex, which mediates electron transfer between photosystem II (PSII) and photosystem I (PSI), cyclic electron flow around PSI, and state transitions. The protein is Cytochrome b6-f complex subunit 8 of Synechococcus sp. (strain RCC307).